The chain runs to 158 residues: Arginine repressor (158 aa).

Belongs to the ArgR family.

It is found in the cytoplasm. The protein operates within amino-acid biosynthesis; L-arginine biosynthesis [regulation]. Regulates arginine biosynthesis genes. This Anaeromyxobacter sp. (strain Fw109-5) protein is Arginine repressor.